Here is a 558-residue protein sequence, read N- to C-terminus: Probable rhamnogalacturonase B (558 aa).

The N-terminal stretch at 1 to 21 is a signal peptide; the sequence is MLLDKLSVLSFLGLAPIFAAA. Cysteines 42 and 68 form a disulfide. The N-linked (GlcNAc...) asparagine glycan is linked to asparagine 145. Aspartate 219 functions as the Proton donor in the catalytic mechanism. An intrachain disulfide couples cysteine 221 to cysteine 238. N-linked (GlcNAc...) asparagine glycosylation is found at asparagine 239 and asparagine 254. The active site involves histidine 294. An N-linked (GlcNAc...) asparagine glycan is attached at asparagine 321. Disulfide bonds link cysteine 344–cysteine 350 and cysteine 372–cysteine 381. A compositionally biased stretch (low complexity) spans 503-526; sequence VGAQEGSTTSAPSFAAPSGAGNSP. Residues 503-558 are disordered; it reads VGAQEGSTTSAPSFAAPSGAGNSPQGPTGASGFGEKGQQGEQGEQGEQGEQGVCYV.

The protein belongs to the glycosyl hydrolase 28 family.

It localises to the secreted. The catalysed reaction is Endohydrolysis of alpha-D-GalA-(1-&gt;2)-alpha-L-Rha glycosidic bond in the rhamnogalacturonan I backbone with initial inversion of anomeric configuration releasing oligosaccharides with beta-D-GalA at the reducing end.. Its function is as follows. Pectinolytic enzymes consist of four classes of enzymes: pectine lyase, polygalacturonase, pectin methylesterase and rhamnogalacturonase. Hydrolyzes alpha-D-galacturonopyranosyl-(1,2)-alpha-L-rhamnopyranosyl linkages in the backbone of the hairy regions of pectins. The sequence is that of Probable rhamnogalacturonase B (rhgB) from Aspergillus niger (strain ATCC MYA-4892 / CBS 513.88 / FGSC A1513).